Reading from the N-terminus, the 265-residue chain is Undecaprenyl-diphosphatase (265 aa).

7 helical membrane-spanning segments follow: residues 42-62, 82-102, 108-128, 143-163, 181-201, 221-241, and 248-264; these read ATTFEVAIQLGAILAVVVLYW, GIMLLLLTSLPASVLGLAAHS, LFTPSTVAIALAVGAIFMLLV, MSPALALGIGCFQCLALWPGF, GLAAEYSFIAAVPIMFAATGY, GFVVSFLSAWAAVKLFIALVG, and FAWYRLAIAPLVYYFMA.

Belongs to the UppP family.

It localises to the cell inner membrane. The catalysed reaction is di-trans,octa-cis-undecaprenyl diphosphate + H2O = di-trans,octa-cis-undecaprenyl phosphate + phosphate + H(+). Its function is as follows. Catalyzes the dephosphorylation of undecaprenyl diphosphate (UPP). Confers resistance to bacitracin. This chain is Undecaprenyl-diphosphatase, found in Nitratidesulfovibrio vulgaris (strain ATCC 29579 / DSM 644 / CCUG 34227 / NCIMB 8303 / VKM B-1760 / Hildenborough) (Desulfovibrio vulgaris).